The chain runs to 742 residues: Photosystem I P700 chlorophyll a apoprotein A2 (742 aa).

Transmembrane regions (helical) follow at residues 46-69 (LFSTHFGHLAIIALWVAGNLFHVA), 135-158 (LFQASIFMSILACWVLFAGWLHLQ), 175-199 (LNHHLSVLFGFSSIAWTGHLVHVAI), 273-291 (IAHHHIAIGCVFVIAGHMY), 336-359 (LHFQLGLALASLGVATSLVAQHMG), 375-401 (SALYTHHQYIAMFLMVGAFAHGAIFFV), 423-445 (ALISHLSWVTMLLGFHTLGIYVH), and 525-543 (FLVHHAIALGLHTTALILI). [4Fe-4S] cluster contacts are provided by cysteine 567 and cysteine 576. 2 consecutive transmembrane segments (helical) span residues 583-604 (AMYLAMFWALNLIAWVTFYWHW) and 651-673 (LSPWAWMFLFGHLVWATGFMFLI). Residues histidine 662, methionine 670, and tyrosine 678 each coordinate divinyl chlorophyll a. Residue tryptophan 679 coordinates phylloquinone. A helical transmembrane segment spans residues 715-735 (LVGLAHFTIGNILTFGAFVIA).

It belongs to the PsaA/PsaB family. The PsaA/B heterodimer binds the P700 divinyl chlorophyll special pair and subsequent electron acceptors. PSI consists of a core antenna complex that captures photons, and an electron transfer chain that converts photonic excitation into a charge separation. The cyanobacterial PSI reaction center is composed of one copy each of PsaA,B,C,D,E,F,I,J,K,L,M and X, and forms trimeric complexes. It depends on PSI electron transfer chain: 5 divinyl chlorophyll a, 1 divinyl chlorophyll a', 2 phylloquinones and 3 4Fe-4S clusters. PSI core antenna: 90 divinyl chlorophyll a, 22 carotenoids, 3 phospholipids and 1 galactolipid. P700 is a divinyl chlorophyll a/divinyl chlorophyll a' dimer, A0 is one or more divinyl chlorophyll a, A1 is one or both phylloquinones and FX is a shared 4Fe-4S iron-sulfur center. as a cofactor.

It is found in the cellular thylakoid membrane. The enzyme catalyses reduced [plastocyanin] + hnu + oxidized [2Fe-2S]-[ferredoxin] = oxidized [plastocyanin] + reduced [2Fe-2S]-[ferredoxin]. In terms of biological role, psaA and PsaB bind P700, the primary electron donor of photosystem I (PSI), as well as the electron acceptors A0, A1 and FX. PSI is a plastocyanin/cytochrome c6-ferredoxin oxidoreductase, converting photonic excitation into a charge separation, which transfers an electron from the donor P700 chlorophyll pair to the spectroscopically characterized acceptors A0, A1, FX, FA and FB in turn. Oxidized P700 is reduced on the lumenal side of the thylakoid membrane by plastocyanin or cytochrome c6. The protein is Photosystem I P700 chlorophyll a apoprotein A2 of Prochlorococcus marinus (strain MIT 9312).